The primary structure comprises 219 residues: 3,4-dihydroxy-2-butanone 4-phosphate synthase (219 aa).

D-ribulose 5-phosphate contacts are provided by residues 28 to 29 (RE), Asp33, 140 to 144 (REGHT), and Glu164. Residue Glu29 participates in Mg(2+) binding. His143 is a binding site for Mg(2+).

The protein belongs to the DHBP synthase family. In terms of assembly, homodimer. It depends on Mg(2+) as a cofactor. Mn(2+) serves as cofactor.

The enzyme catalyses D-ribulose 5-phosphate = (2S)-2-hydroxy-3-oxobutyl phosphate + formate + H(+). It functions in the pathway cofactor biosynthesis; riboflavin biosynthesis; 2-hydroxy-3-oxobutyl phosphate from D-ribulose 5-phosphate: step 1/1. Its function is as follows. Catalyzes the conversion of D-ribulose 5-phosphate to formate and 3,4-dihydroxy-2-butanone 4-phosphate. The chain is 3,4-dihydroxy-2-butanone 4-phosphate synthase from Methanocorpusculum labreanum (strain ATCC 43576 / DSM 4855 / Z).